Consider the following 91-residue polypeptide: Progonadoliberin-1 (91 aa).

The first 23 residues, 1–23, serve as a signal peptide directing secretion; that stretch reads MEPIPKLLAGLLLLTLCVVGCSS. Glutamine 24 is modified (pyrrolidone carboxylic acid). Glycine amide is present on glycine 33.

Belongs to the GnRH family. In terms of processing, the precursor is cleaved by ACE, which removes the Gly-Lys-Arg peptide at the C-terminus, leading to mature hormone. The mature form of Gonadoliberin-1 is also cleaved and degraded by ACE.

Its subcellular location is the secreted. In terms of biological role, stimulates the secretion of gonadotropins; it stimulates the secretion of both luteinizing and follicle-stimulating hormones. The chain is Progonadoliberin-1 (GNRH1) from Sus scrofa (Pig).